Consider the following 142-residue polypeptide: Hemoglobin subunit alpha-2 (142 aa).

One can recognise a Globin domain in the interval 2-142; the sequence is VLSAADKSNI…VSTVLTSKYR (141 aa). H59 lines the O2 pocket. Residue H88 coordinates heme b.

It belongs to the globin family. In terms of assembly, heterotetramer of two alpha chains and two beta chains. In terms of tissue distribution, red blood cells.

In terms of biological role, involved in oxygen transport from the lung to the various peripheral tissues. The protein is Hemoglobin subunit alpha-2 of Bubalus bubalis (Domestic water buffalo).